A 440-amino-acid chain; its full sequence is Chromosomal replication initiator protein DnaA (440 aa).

The segment at 1–69 is domain I, interacts with DnaA modulators; sequence MKERILQEIK…VKVVLGNDAT (69 aa). Residues 69-96 are domain II; sequence TFEITYEAFEPHSSYSEPLVKKRAVLLT. The interval 97–313 is domain III, AAA+ region; that stretch reads PLNPDYTFEN…GAIIKLLVYK (217 aa). Residues Gly140, Gly142, Lys143, and Thr144 each coordinate ATP. The domain IV, binds dsDNA stretch occupies residues 314–440; it reads ETTGKEVDLK…GEISRRALSG (127 aa).

It belongs to the DnaA family. Oligomerizes as a right-handed, spiral filament on DNA at oriC.

Its subcellular location is the cytoplasm. In terms of biological role, plays an essential role in the initiation and regulation of chromosomal replication. ATP-DnaA binds to the origin of replication (oriC) to initiate formation of the DNA replication initiation complex once per cell cycle. Binds the DnaA box (a 9 base pair repeat at the origin) and separates the double-stranded (ds)DNA. Forms a right-handed helical filament on oriC DNA; dsDNA binds to the exterior of the filament while single-stranded (ss)DNA is stabiized in the filament's interior. The ATP-DnaA-oriC complex binds and stabilizes one strand of the AT-rich DNA unwinding element (DUE), permitting loading of DNA polymerase. After initiation quickly degrades to an ADP-DnaA complex that is not apt for DNA replication. Binds acidic phospholipids. This chain is Chromosomal replication initiator protein DnaA, found in Thermotoga sp. (strain RQ2).